Here is a 456-residue protein sequence, read N- to C-terminus: GTPase Der (456 aa).

2 EngA-type G domains span residues 4–169 (PVVA…PSKD) and 178–353 (VQLA…DQSR). GTP contacts are provided by residues 10–17 (GRPNVGKS), 57–61 (DTGGL), 120–123 (NKCE), 184–191 (GRPNVGKS), 231–235 (DTAGI), and 296–299 (NKWD). The 86-residue stretch at 354 to 439 (RRVTTSVVNE…PIKLFWRGKQ (86 aa)) folds into the KH-like domain.

The protein belongs to the TRAFAC class TrmE-Era-EngA-EngB-Septin-like GTPase superfamily. EngA (Der) GTPase family. As to quaternary structure, associates with the 50S ribosomal subunit.

Its function is as follows. GTPase that plays an essential role in the late steps of ribosome biogenesis. This is GTPase Der from Prochlorococcus marinus (strain NATL2A).